The sequence spans 376 residues: Transcription initiation factor IIA subunit 1 (376 aa).

The residue at position 2 (Ala-2) is an N-acetylalanine. 2 stretches are compositionally biased toward low complexity: residues 69–79 (QVQQQHQPQQQ) and 89–105 (QAQPQQTVPQQAQTQQV). 3 disordered regions span residues 69-107 (QVQQQHQPQQQQHHHHHHHQQAQPQQTVPQQAQTQQVLI), 247-266 (QAQITATGQQQPQAQPAQTQ), and 274-329 (DGTG…QELF). Ser-280, Ser-281, Ser-316, and Ser-321 each carry phosphoserine; by TAF1. Over residues 280–329 (SSEEDEDEEEDYDDDEEEDKEKDGAEDGQVEEEPLNSEDDVSDEEGQELF) the composition is skewed to acidic residues. DNA-binding residues include His-343 and Arg-344.

The protein belongs to the TFIIA subunit 1 family. TFIIA is a heterodimer of the large unprocessed subunit 1 and a small subunit gamma. It was originally believed to be a heterotrimer of an alpha (p35), a beta (p19) and a gamma subunit (p12). TFIIA forms a complex with TBP. Part of TBP-based Pol II pre-initiation complex (PIC), in which Pol II core assembles with general transcription factors and other specific initiation factors including GTF2E1, GTF2E2, GTF2F1, GTF2F2, TCEA1, ERCC2, ERCC3, GTF2H2, GTF2H3, GTF2H4, GTF2H5, GTF2A1, GTF2A2, GTF2B and TBP; this large multi-subunit PIC complex mediates DNA unwinding and targets Pol II core to the transcription start site where the first phosphodiester bond forms. The alpha and beta subunits are postranslationally produced from the precursor form by TASP1. The cleavage promotes proteasomal degradation.

The protein localises to the nucleus. Functionally, TFIIA is a component of the transcription machinery of RNA polymerase II and plays an important role in transcriptional activation. TFIIA in a complex with TBP mediates transcriptional activity. The sequence is that of Transcription initiation factor IIA subunit 1 (GTF2A1) from Homo sapiens (Human).